The primary structure comprises 356 residues: Alanine racemase (356 aa).

The active-site Proton acceptor; specific for D-alanine is K35. K35 carries the post-translational modification N6-(pyridoxal phosphate)lysine. R130 lines the substrate pocket. The active-site Proton acceptor; specific for L-alanine is the Y253. M301 lines the substrate pocket.

This sequence belongs to the alanine racemase family. Requires pyridoxal 5'-phosphate as cofactor.

It catalyses the reaction L-alanine = D-alanine. Its pathway is amino-acid biosynthesis; D-alanine biosynthesis; D-alanine from L-alanine: step 1/1. Its function is as follows. Catalyzes the interconversion of L-alanine and D-alanine. May also act on other amino acids. This is Alanine racemase (alr) from Burkholderia mallei (strain NCTC 10229).